The following is a 147-amino-acid chain: Large ribosomal subunit protein bL9 (147 aa).

The disordered stretch occupies residues 40–60; that stretch reads TTGNLKQHEAHERKAAEEAKQ. Residues 45–59 are compositionally biased toward basic and acidic residues; the sequence is KQHEAHERKAAEEAK.

This sequence belongs to the bacterial ribosomal protein bL9 family.

In terms of biological role, binds to the 23S rRNA. This Exiguobacterium sibiricum (strain DSM 17290 / CCUG 55495 / CIP 109462 / JCM 13490 / 255-15) protein is Large ribosomal subunit protein bL9.